A 250-amino-acid polypeptide reads, in one-letter code: Phosphoribosylaminoimidazole-succinocarboxamide synthase (250 aa).

This sequence belongs to the SAICAR synthetase family.

It carries out the reaction 5-amino-1-(5-phospho-D-ribosyl)imidazole-4-carboxylate + L-aspartate + ATP = (2S)-2-[5-amino-1-(5-phospho-beta-D-ribosyl)imidazole-4-carboxamido]succinate + ADP + phosphate + 2 H(+). It functions in the pathway purine metabolism; IMP biosynthesis via de novo pathway; 5-amino-1-(5-phospho-D-ribosyl)imidazole-4-carboxamide from 5-amino-1-(5-phospho-D-ribosyl)imidazole-4-carboxylate: step 1/2. The protein is Phosphoribosylaminoimidazole-succinocarboxamide synthase of Picosynechococcus sp. (strain ATCC 27264 / PCC 7002 / PR-6) (Agmenellum quadruplicatum).